Reading from the N-terminus, the 1054-residue chain is Leucine-rich repeats and immunoglobulin-like domains protein 2 (1054 aa).

The signal sequence occupies residues 1-39; sequence MAAAPRGIWEQRRLGCGLGPLARLLILAQALRLLPAARA. The region spanning 40–74 is the LRRNT domain; that stretch reads GLCPAPCACRLPLLDCSRRKLPAPSWRALSGPLPS. 15 LRR repeats span residues 75–96, 97–118, 120–141, 144–165, 167–188, 192–213, 215–236, 239–260, 263–284, 287–308, 311–332, 335–356, 359–381, 386–407, and 410–431; these read DISS…LESQ, TLQE…GEPT, NITL…AFEL, ALES…SFPR, SLKY…CFDN, SLLV…VFKL, HLQF…TFQG, SLRS…AFFG, NMEE…WLYG, MLQQ…AWEF, RLSE…AFVG, LLER…VFRF, NLQT…SEAF, SLTK…AFIG, and SLEY…AFSQ. Asparagine 90 carries an N-linked (GlcNAc...) asparagine glycan. An N-linked (GlcNAc...) asparagine glycan is attached at asparagine 120. Asparagine 172 and asparagine 188 each carry an N-linked (GlcNAc...) asparagine glycan. Asparagine 273 carries N-linked (GlcNAc...) asparagine glycosylation. N-linked (GlcNAc...) asparagine glycans are attached at residues asparagine 440, asparagine 467, asparagine 513, asparagine 570, and asparagine 588. The region spanning 442–493 is the LRRCT domain; it reads SSLLCDCHLKWLLQWLVDNNFHHSVNVSCAHPEWLAGQSILNVDLKDFVCDD. Ig-like C2-type domains are found at residues 497–596, 601–690, and 695–784; these read PQIR…AKLT, PSFL…ASLT, and PSFI…NVIS. A disulfide bridge links cysteine 518 with cysteine 579. A disulfide bridge connects residues cysteine 622 and cysteine 674. N-linked (GlcNAc...) asparagine glycosylation is found at asparagine 686 and asparagine 727. Cysteine 716 and cysteine 765 are disulfide-bonded. A helical membrane pass occupies residues 807-827; sequence IVIIVVVCCVVGTSLIWVIVI. Tyrosine 905 is modified (phosphotyrosine). An N-linked (GlcNAc...) asparagine glycan is attached at asparagine 1024.

Its subcellular location is the cell membrane. The protein resides in the cytoplasm. The protein is Leucine-rich repeats and immunoglobulin-like domains protein 2 (Lrig2) of Mus musculus (Mouse).